A 296-amino-acid chain; its full sequence is 4-hydroxybenzoate octaprenyltransferase (296 aa).

8 consecutive transmembrane segments (helical) span residues 28–48 (PIGIYLLLWPTLTAVWIAGLG), 52–72 (LANVLIFGLGVVLMRAAGCCI), 102–122 (ALALFGILVAVSFLLVLCTNS), 145–167 (TYYPQVVLGAAYSWGIPMAFTAA), 174–196 (SAWLLYIANLLWTVGYDTYYAMV), 219–239 (MIILTLQMLSLGCLLLAGSRF), 241–261 (LGGWFHLGLLGAALCFAWEYW), and 275–295 (FLHNHWAGLLVFMGVVLDYAL).

The protein belongs to the UbiA prenyltransferase family. Requires Mg(2+) as cofactor.

It localises to the cell inner membrane. The enzyme catalyses all-trans-octaprenyl diphosphate + 4-hydroxybenzoate = 4-hydroxy-3-(all-trans-octaprenyl)benzoate + diphosphate. The protein operates within cofactor biosynthesis; ubiquinone biosynthesis. In terms of biological role, catalyzes the prenylation of para-hydroxybenzoate (PHB) with an all-trans polyprenyl group. Mediates the second step in the final reaction sequence of ubiquinone-8 (UQ-8) biosynthesis, which is the condensation of the polyisoprenoid side chain with PHB, generating the first membrane-bound Q intermediate 3-octaprenyl-4-hydroxybenzoate. This is 4-hydroxybenzoate octaprenyltransferase from Pseudomonas putida (strain W619).